A 348-amino-acid chain; its full sequence is Phosphate acyltransferase (348 aa).

The protein belongs to the PlsX family. Homodimer. Probably interacts with PlsY.

Its subcellular location is the cytoplasm. It catalyses the reaction a fatty acyl-[ACP] + phosphate = an acyl phosphate + holo-[ACP]. Its pathway is lipid metabolism; phospholipid metabolism. Catalyzes the reversible formation of acyl-phosphate (acyl-PO(4)) from acyl-[acyl-carrier-protein] (acyl-ACP). This enzyme utilizes acyl-ACP as fatty acyl donor, but not acyl-CoA. The chain is Phosphate acyltransferase from Neisseria gonorrhoeae (strain ATCC 700825 / FA 1090).